We begin with the raw amino-acid sequence, 348 residues long: Centromere protein N-A (348 aa).

It belongs to the CENP-N/CHL4 family.

The protein resides in the nucleus. The protein localises to the chromosome. It is found in the centromere. In terms of biological role, probable component of a centromeric complex involved in assembly of kinetochore proteins, mitotic progression and chromosome segregation. The protein is Centromere protein N-A (cenpn-a) of Xenopus laevis (African clawed frog).